Reading from the N-terminus, the 290-residue chain is Bifunctional protein FolD (290 aa).

NADP(+)-binding positions include 165 to 167, Ser190, and Ile231; that span reads GRS.

It belongs to the tetrahydrofolate dehydrogenase/cyclohydrolase family. In terms of assembly, homodimer.

The enzyme catalyses (6R)-5,10-methylene-5,6,7,8-tetrahydrofolate + NADP(+) = (6R)-5,10-methenyltetrahydrofolate + NADPH. It catalyses the reaction (6R)-5,10-methenyltetrahydrofolate + H2O = (6R)-10-formyltetrahydrofolate + H(+). It participates in one-carbon metabolism; tetrahydrofolate interconversion. In terms of biological role, catalyzes the oxidation of 5,10-methylenetetrahydrofolate to 5,10-methenyltetrahydrofolate and then the hydrolysis of 5,10-methenyltetrahydrofolate to 10-formyltetrahydrofolate. This is Bifunctional protein FolD from Aromatoleum aromaticum (strain DSM 19018 / LMG 30748 / EbN1) (Azoarcus sp. (strain EbN1)).